The sequence spans 356 residues: Zinc finger CW-type PWWP domain protein 2 (356 aa).

The CW-type zinc-finger motif lies at M24–P79. Positions 33, 38, 60, and 71 each coordinate Zn(2+). The PWWP domain occupies L98–T162. Residues Q279–C307 are disordered.

Its function is as follows. Histone methylation reader which binds to non-methylated (H3K4me0), monomethylated (H3K4me1), dimethylated (H3K4me2) and trimethylated (H3K4me3) 'Lys-4' on histone H3. The order of binding preference is H3K4me3 &gt; H3K4me2 &gt; H3K4me1 &gt; H3K4me0. The polypeptide is Zinc finger CW-type PWWP domain protein 2 (ZCWPW2) (Homo sapiens (Human)).